A 313-amino-acid chain; its full sequence is Adhesin MafA 2/3 (313 aa).

The signal sequence occupies residues 1–14 (MKTLLLLIPLVLTA). C15 is lipidated: N-palmitoyl cysteine. C15 is lipidated: S-diacylglycerol cysteine. The segment covering 282–298 (GDTTAQNRPDFKQNNGK) has biased composition (polar residues). Positions 282–313 (GDTTAQNRPDFKQNNGKNPDVGNEVIRRRKGG) are disordered.

The protein belongs to the MafA family.

It is found in the cell outer membrane. This is Adhesin MafA 2/3 (mafA2) from Neisseria gonorrhoeae (strain ATCC 700825 / FA 1090).